A 457-amino-acid chain; its full sequence is NADH-quinone oxidoreductase subunit D (457 aa).

The segment at 1–23 (MSTHTETPVDGSAETITGAQPYE) is disordered.

Belongs to the complex I 49 kDa subunit family. In terms of assembly, NDH-1 is composed of 14 different subunits. Subunits NuoB, C, D, E, F, and G constitute the peripheral sector of the complex.

Its subcellular location is the cell membrane. The enzyme catalyses a quinone + NADH + 5 H(+)(in) = a quinol + NAD(+) + 4 H(+)(out). Functionally, NDH-1 shuttles electrons from NADH, via FMN and iron-sulfur (Fe-S) centers, to quinones in the respiratory chain. The immediate electron acceptor for the enzyme in this species is believed to be a menaquinone. Couples the redox reaction to proton translocation (for every two electrons transferred, four hydrogen ions are translocated across the cytoplasmic membrane), and thus conserves the redox energy in a proton gradient. In Parafrankia sp. (strain EAN1pec), this protein is NADH-quinone oxidoreductase subunit D.